Consider the following 214-residue polypeptide: Urease accessory protein UreF (214 aa).

It belongs to the UreF family. In terms of assembly, ureD, UreF and UreG form a complex that acts as a GTP-hydrolysis-dependent molecular chaperone, activating the urease apoprotein by helping to assemble the nickel containing metallocenter of UreC. The UreE protein probably delivers the nickel.

The protein resides in the cytoplasm. Its function is as follows. Required for maturation of urease via the functional incorporation of the urease nickel metallocenter. The protein is Urease accessory protein UreF of Ruegeria sp. (strain TM1040) (Silicibacter sp.).